Reading from the N-terminus, the 583-residue chain is Phytoene desaturase (583 aa).

Positions 1–20 (MAPPKHVIIIGAGAGGTATA) are cleaved as a signal peptide. The chain crosses the membrane as a helical span at residues 531 to 551 (IIWFLLIALFAATLVLFIAFP).

This sequence belongs to the carotenoid/retinoid oxidoreductase family. NAD(+) serves as cofactor.

The protein resides in the membrane. It catalyses the reaction 15-cis-phytoene + 5 A = all-trans-3,4-didehydrolycopene + 5 AH2. The protein operates within carotenoid biosynthesis; lycopene biosynthesis. In terms of biological role, phytoene desaturase involved in the carotenoid biosynthesis pathway. Converts phytoene into 3,4-didehydrolycopene via the intermediary of phytofluene, zeta-carotene, neurosporene and lycopene, by introducing up to five double bonds into phytoene. In Phycomyces blakesleeanus (strain ATCC 8743b / DSM 1359 / FGSC 10004 / NBRC 33097 / NRRL 1555), this protein is Phytoene desaturase (carB).